The sequence spans 340 residues: DNA-directed RNA polymerase subunit alpha (340 aa).

Positions 1–237 (MSSDELVYMN…EQMNPFINFD (237 aa)) are alpha N-terminal domain (alpha-NTD). Residues 256–340 (FNENLYRSVD…PEEDQIKEGE (85 aa)) form an alpha C-terminal domain (alpha-CTD) region.

It belongs to the RNA polymerase alpha chain family. As to quaternary structure, homodimer. The RNAP catalytic core consists of 2 alpha, 1 beta, 1 beta' and 1 omega subunit. When a sigma factor is associated with the core the holoenzyme is formed, which can initiate transcription.

It catalyses the reaction RNA(n) + a ribonucleoside 5'-triphosphate = RNA(n+1) + diphosphate. DNA-dependent RNA polymerase catalyzes the transcription of DNA into RNA using the four ribonucleoside triphosphates as substrates. This is DNA-directed RNA polymerase subunit alpha from Desulforapulum autotrophicum (strain ATCC 43914 / DSM 3382 / VKM B-1955 / HRM2) (Desulfobacterium autotrophicum).